A 228-amino-acid polypeptide reads, in one-letter code: Ribonuclease 3 (228 aa).

The 123-residue stretch at 5 to 127 (LMALQARLQH…VIGAVYLDAG (123 aa)) folds into the RNase III domain. Glu-40 is a Mg(2+) binding site. Asp-44 is an active-site residue. 2 residues coordinate Mg(2+): Asp-113 and Glu-116. The active site involves Glu-116. One can recognise a DRBM domain in the interval 154 to 224 (DPKTELQEWL…AAAMLQTLKA (71 aa)).

It belongs to the ribonuclease III family. As to quaternary structure, homodimer. Mg(2+) serves as cofactor.

It localises to the cytoplasm. It catalyses the reaction Endonucleolytic cleavage to 5'-phosphomonoester.. Digests double-stranded RNA. Involved in the processing of primary rRNA transcript to yield the immediate precursors to the large and small rRNAs (23S and 16S). Processes some mRNAs, and tRNAs when they are encoded in the rRNA operon. Processes pre-crRNA and tracrRNA of type II CRISPR loci if present in the organism. The polypeptide is Ribonuclease 3 (Albidiferax ferrireducens (strain ATCC BAA-621 / DSM 15236 / T118) (Rhodoferax ferrireducens)).